Reading from the N-terminus, the 436-residue chain is Glutamyl-tRNA reductase (436 aa).

Substrate contacts are provided by residues 49–52 (TCNR), serine 109, 114–116 (EGQ), and glutamine 120. Residue cysteine 50 is the Nucleophile of the active site. 198-203 (GAGRMS) provides a ligand contact to NADP(+).

The protein belongs to the glutamyl-tRNA reductase family. In terms of assembly, homodimer.

It carries out the reaction (S)-4-amino-5-oxopentanoate + tRNA(Glu) + NADP(+) = L-glutamyl-tRNA(Glu) + NADPH + H(+). It participates in porphyrin-containing compound metabolism; protoporphyrin-IX biosynthesis; 5-aminolevulinate from L-glutamyl-tRNA(Glu): step 1/2. Its pathway is porphyrin-containing compound metabolism; chlorophyll biosynthesis. Catalyzes the NADPH-dependent reduction of glutamyl-tRNA(Glu) to glutamate 1-semialdehyde (GSA). The protein is Glutamyl-tRNA reductase of Prochlorococcus marinus (strain MIT 9303).